Consider the following 527-residue polypeptide: Pyruvate kinase 2, cytosolic (527 aa).

Arg58 is a binding site for substrate. K(+)-binding residues include Asp60, Ser62, Asp92, and Thr93. Asp60–Trp63 provides a ligand contact to ATP. Residue Lys256 participates in substrate binding. Glu258 is a Mg(2+) binding site. Residues Gly281, Asn282, and Thr313 each contribute to the substrate site. Asn282 is a Mg(2+) binding site.

It belongs to the pyruvate kinase family. Homotetramer. Requires Mg(2+) as cofactor. The cofactor is K(+).

It is found in the cytoplasm. The protein localises to the cytosol. It catalyses the reaction pyruvate + ATP = phosphoenolpyruvate + ADP + H(+). It participates in carbohydrate degradation; glycolysis; pyruvate from D-glyceraldehyde 3-phosphate: step 5/5. Its function is as follows. Key regulatory enzyme of the glycolytic pathway that catalyzes the final step of glycolysis, converting ADP and phosphoenolpyruvate (PEP) to ATP and pyruvate by essentially irreversible transphosphorylation. This Oryza sativa subsp. indica (Rice) protein is Pyruvate kinase 2, cytosolic.